The sequence spans 133 residues: p53 and DNA damage-regulated protein 1 (133 aa).

Belongs to the prefoldin subunit beta family. In terms of assembly, component of the PAQosome complex which is responsible for the biogenesis of several protein complexes and which consists of R2TP complex members RUVBL1, RUVBL2, RPAP3 and PIH1D1, URI complex members PFDN2, PFDN6, PDRG1, UXT and URI1 as well as ASDURF, POLR2E and DNAAF10/WDR92.

The protein resides in the cytoplasm. Its function is as follows. May play a role in chaperone-mediated protein folding. In Bos taurus (Bovine), this protein is p53 and DNA damage-regulated protein 1 (PDRG1).